We begin with the raw amino-acid sequence, 305 residues long: tRNA pseudouridine synthase B (305 aa).

The active-site Nucleophile is aspartate 39.

The protein belongs to the pseudouridine synthase TruB family. Type 1 subfamily.

The enzyme catalyses uridine(55) in tRNA = pseudouridine(55) in tRNA. In terms of biological role, responsible for synthesis of pseudouridine from uracil-55 in the psi GC loop of transfer RNAs. The sequence is that of tRNA pseudouridine synthase B from Staphylococcus aureus (strain bovine RF122 / ET3-1).